Here is a 149-residue protein sequence, read N- to C-terminus: SsrA-binding protein (149 aa).

It belongs to the SmpB family.

It is found in the cytoplasm. Functionally, required for rescue of stalled ribosomes mediated by trans-translation. Binds to transfer-messenger RNA (tmRNA), required for stable association of tmRNA with ribosomes. tmRNA and SmpB together mimic tRNA shape, replacing the anticodon stem-loop with SmpB. tmRNA is encoded by the ssrA gene; the 2 termini fold to resemble tRNA(Ala) and it encodes a 'tag peptide', a short internal open reading frame. During trans-translation Ala-aminoacylated tmRNA acts like a tRNA, entering the A-site of stalled ribosomes, displacing the stalled mRNA. The ribosome then switches to translate the ORF on the tmRNA; the nascent peptide is terminated with the 'tag peptide' encoded by the tmRNA and targeted for degradation. The ribosome is freed to recommence translation, which seems to be the essential function of trans-translation. This chain is SsrA-binding protein, found in Acholeplasma laidlawii (strain PG-8A).